We begin with the raw amino-acid sequence, 268 residues long: Ubiquinone biosynthesis protein COQ4 homolog 1, mitochondrial (268 aa).

The segment covering 1 to 10 has biased composition (basic residues); sequence MFLRRVHPVR. Residues 1-18 constitute a mitochondrion transit peptide; that stretch reads MFLRRVHPVRLGHASQRS. The segment at 1–44 is disordered; sequence MFLRRVHPVRLGHASQRSLTTTKSRNESTTTTVEAPQAAPSPPP. The span at 20 to 38 shows a compositional bias: low complexity; that stretch reads TTTKSRNESTTTTVEAPQA. Zn(2+)-binding residues include His177, Asp178, His181, and Glu193.

This sequence belongs to the COQ4 family. In terms of assembly, component of a multi-subunit COQ enzyme complex. Zn(2+) is required as a cofactor.

It is found in the mitochondrion inner membrane. The catalysed reaction is a 4-hydroxy-3-methoxy-5-(all-trans-polyprenyl)benzoate + H(+) = a 2-methoxy-6-(all-trans-polyprenyl)phenol + CO2. It participates in cofactor biosynthesis; ubiquinone biosynthesis. Functionally, lyase that catalyzes the C1-decarboxylation of 4-hydroxy-3-methoxy-5-(all-trans-polyprenyl)benzoic acid into 2-methoxy-6-(all-trans-polyprenyl)phenol during ubiquinone biosynthesis. This chain is Ubiquinone biosynthesis protein COQ4 homolog 1, mitochondrial, found in Culex quinquefasciatus (Southern house mosquito).